Consider the following 542-residue polypeptide: Organic anion transporter 3 (542 aa).

The Cytoplasmic portion of the chain corresponds to 1–9 (MTFSEILDR). Phosphoserine is present on S4. A helical membrane pass occupies residues 10-30 (VGSMGPFQFLHVALLGFPILG). The Extracellular portion of the chain corresponds to 31–123 (MANHNLLQIF…LVCSSNKLKE (93 aa)). A glycan (N-linked (GlcNAc...) asparagine) is linked at N86. The chain crosses the membrane as a helical span at residues 124-144 (MAQSIFMAGILIGGLVLGDLS). Over 145–150 (DRFGRK) the chain is Cytoplasmic. A helical transmembrane segment spans residues 151 to 171 (PILTCCYLLLAASGSSTAFSP). Topologically, residues 172–176 (TLPIY) are extracellular. The helical transmembrane segment at 177-197 (MVFRFLCGFSISGISLSTVIL) threads the bilayer. Residues 198–212 (NVEWVPTKMRAITST) are Cytoplasmic-facing. The helical transmembrane segment at 213–233 (AIGYCYTIGQFILPGLAYAIP) threads the bilayer. Over 234-236 (QWR) the chain is Extracellular. The chain crosses the membrane as a helical span at residues 237 to 257 (WLQLTVSVPYFIFSLLSWWIP). Residues 258–327 (ESIRWLVLAG…FRTPILRRVT (70 aa)) lie on the Cytoplasmic side of the membrane. Residues 328–348 (LCLSLAWFATGFAYYSLAMGV) traverse the membrane as a helical segment. Topologically, residues 349–354 (EEFGVN) are extracellular. A helical transmembrane segment spans residues 355 to 375 (IYILQIIFGGVDIPAKFITIL). At 376-389 (SLSYLGRHITQGAA) the chain is on the cytoplasmic side. The chain crosses the membrane as a helical span at residues 390–410 (LILAGAAILSLIFVPMDMSLL). R411 is a topological domain (extracellular). The helical transmembrane segment at 412-432 (TILAVFGKGCLSGSFSCLFLY) threads the bilayer. The Cytoplasmic segment spans residues 433–471 (TSELFPTVIRQTGMGISNVWARVGSMISPLVKITGEIQP). A helical transmembrane segment spans residues 472 to 492 (FIPNIIYGTVALLGGSAALFL). At 493–542 (PETLNQPLPETLEDMENWFLQSKKLKQEPEAEKASQRIPLQPSGPGVDRS) the chain is on the extracellular side. Residues 518–527 (KQEPEAEKAS) show a composition bias toward basic and acidic residues. The disordered stretch occupies residues 518–542 (KQEPEAEKASQRIPLQPSGPGVDRS).

This sequence belongs to the major facilitator (TC 2.A.1) superfamily. Organic cation transporter (TC 2.A.1.19) family.

Its subcellular location is the basolateral cell membrane. The enzyme catalyses estrone 3-sulfate(out) + glutarate(in) = estrone 3-sulfate(in) + glutarate(out). It carries out the reaction estrone 3-sulfate(in) + 2-oxoglutarate(out) = estrone 3-sulfate(out) + 2-oxoglutarate(in). The catalysed reaction is glutarate(in) + 2-oxoglutarate(out) = glutarate(out) + 2-oxoglutarate(in). It catalyses the reaction urate(in) + 2-oxoglutarate(out) = urate(out) + 2-oxoglutarate(in). The enzyme catalyses taurocholate(out) + glutarate(in) = taurocholate(in) + glutarate(out). It carries out the reaction dehydroepiandrosterone 3-sulfate(out) + glutarate(in) = dehydroepiandrosterone 3-sulfate(in) + glutarate(out). The catalysed reaction is prostaglandin F2alpha(out) + glutarate(in) = prostaglandin F2alpha(in) + glutarate(out). It catalyses the reaction prostaglandin F2alpha(out) + 2-oxoglutarate(in) = prostaglandin F2alpha(in) + 2-oxoglutarate(out). The enzyme catalyses (R)-carnitine(out) + 2-oxoglutarate(in) = (R)-carnitine(in) + 2-oxoglutarate(out). It carries out the reaction glutarate(in) + (R)-carnitine(out) = glutarate(out) + (R)-carnitine(in). The catalysed reaction is prostaglandin E2(out) + 2-oxoglutarate(in) = prostaglandin E2(in) + 2-oxoglutarate(out). It catalyses the reaction prostaglandin E2(out) + glutarate(in) = prostaglandin E2(in) + glutarate(out). The enzyme catalyses urate(in) + glutarate(out) = urate(out) + glutarate(in). It carries out the reaction taurocholate(out) + 2-oxoglutarate(in) = taurocholate(in) + 2-oxoglutarate(out). The catalysed reaction is dehydroepiandrosterone 3-sulfate(out) + 2-oxoglutarate(in) = dehydroepiandrosterone 3-sulfate(in) + 2-oxoglutarate(out). It catalyses the reaction kynurenate(out) + a dicarboxylate(in) = kynurenate(in) + a dicarboxylate(out). The enzyme catalyses (indol-3-yl)acetate(out) + a dicarboxylate(in) = (indol-3-yl)acetate(in) + a dicarboxylate(out). It carries out the reaction indoxyl sulfate(out) + a dicarboxylate(in) = indoxyl sulfate(in) + a dicarboxylate(out). The catalysed reaction is N-benzoylglycine(out) + a dicarboxylate(in) = N-benzoylglycine(in) + a dicarboxylate(out). It catalyses the reaction 3-carboxy-4-methyl-5-propyl-2-furanpropanoate(out) + a dicarboxylate(in) = 3-carboxy-4-methyl-5-propyl-2-furanpropanoate(in) + a dicarboxylate(out). The enzyme catalyses (6R)-L-erythro-5,6,7,8-tetrahydrobiopterin(out) + a dicarboxylate(in) = (6R)-L-erythro-5,6,7,8-tetrahydrobiopterin(in) + a dicarboxylate(out). It carries out the reaction L-erythro-7,8-dihydrobiopterin(out) + a dicarboxylate(in) = L-erythro-7,8-dihydrobiopterin(in) + a dicarboxylate(out). The catalysed reaction is L-sepiapterin(out) + a dicarboxylate(in) = L-sepiapterin(in) + a dicarboxylate(out). In terms of biological role, functions as an organic anion/dicarboxylate exchanger that couples organic anion uptake indirectly to the sodium gradient. Transports organic anions such as estrone 3-sulfate (E1S) and urate in exchange for dicarboxylates such as glutarate or ketoglutarate (2-oxoglutarate). Plays an important role in the excretion of endogenous and exogenous organic anions, especially from the kidney and the brain. E1S transport is pH- and chloride-dependent and may also involve E1S/cGMP exchange. Responsible for the transport of prostaglandin E2 (PGE2) and prostaglandin F2(alpha) (PGF2(alpha)) in the basolateral side of the renal tubule. Involved in the transport of neuroactive tryptophan metabolites kynurenate and xanthurenate. Functions as a biopterin transporters involved in the uptake and the secretion of coenzymes tetrahydrobiopterin (BH4), dihydrobiopterin (BH2) and sepiapterin to urine, thereby determining baseline levels of blood biopterins. May be involved in the basolateral transport of steviol, a metabolite of the popular sugar substitute stevioside. May participate in the detoxification/ renal excretion of drugs and xenobiotics, such as the histamine H(2)-receptor antagonists fexofenadine and cimetidine, the antibiotic benzylpenicillin (PCG), the anionic herbicide 2,4-dichloro-phenoxyacetate (2,4-D), the diagnostic agent p-aminohippurate (PAH), the antiviral acyclovir (ACV), and the mycotoxin ochratoxin (OTA), by transporting these exogenous organic anions across the cell membrane in exchange for dicarboxylates such as 2-oxoglutarate. Contributes to the renal uptake of potent uremic toxins (indoxyl sulfate (IS), indole acetate (IA), hippurate/N-benzoylglycine (HA) and 3-carboxy-4-methyl-5-propyl-2-furanpropionate (CMPF)), pravastatin, PCG, E1S and dehydroepiandrosterone sulfate (DHEAS), and is partly involved in the renal uptake of temocaprilat (an angiotensin-converting enzyme (ACE) inhibitor). May contribute to the release of cortisol in the adrenals. Involved in one of the detoxification systems on the choroid plexus (CP), removes substrates such as E1S or taurocholate (TC), PCG, 2,4-D and PAH, from the cerebrospinal fluid (CSF) to the blood for eventual excretion in urine and bile. Also contributes to the uptake of several other organic compounds such as the prostanoids prostaglandin E(2) and prostaglandin F(2-alpha), L-carnitine, and the therapeutic drugs allopurinol, 6-mercaptopurine (6-MP) and 5-fluorouracil (5-FU). Mediates the transport of PAH, PCG, and the statins pravastatin and pitavastatin, from the cerebrum into the blood circulation across the blood-brain barrier (BBB). In summary, plays a role in the efflux of drugs and xenobiotics, helping reduce their undesired toxicological effects on the body. This Oryctolagus cuniculus (Rabbit) protein is Organic anion transporter 3 (SLC22A8).